The primary structure comprises 81 residues: Toxin-like peptide AaF1CA5 (81 aa).

A signal peptide spans 1–22; the sequence is MMKLMLFSIIVILFSLIGSIHG. Residues 25–81 enclose the LCN-type CS-alpha/beta domain; sequence VPGNYPLDSSDDTYLCAPLGENPFCIKICRKHGVKYGLMLRLPCWCEYFGKIKNVKI. 2 disulfide bridges follow: Cys49–Cys68 and Cys53–Cys70.

This sequence belongs to the long (3 C-C) scorpion toxin superfamily. In terms of tissue distribution, expressed by the venom gland.

Its subcellular location is the secreted. Functionally, probable neurotoxin that inhibits ion channels. This chain is Toxin-like peptide AaF1CA5, found in Androctonus australis (Sahara scorpion).